A 540-amino-acid chain; its full sequence is Bifunctional pantoate ligase/cytidylate kinase (540 aa).

The interval Met-1–Leu-280 is pantoate--beta-alanine ligase. Met-28–His-35 is a binding site for ATP. Residue His-35 is the Proton donor of the active site. Gln-59 provides a ligand contact to (R)-pantoate. Gln-59 serves as a coordination point for beta-alanine. Gly-150–Asp-153 provides a ligand contact to ATP. Gln-156 lines the (R)-pantoate pocket. Residues Val-179 and Tyr-187 to Arg-190 contribute to the ATP site. Positions Leu-281–Ile-540 are cytidylate kinase. A disordered region spans residues Asp-288 to Arg-307.

This sequence in the N-terminal section; belongs to the pantothenate synthetase family. The protein in the C-terminal section; belongs to the cytidylate kinase family. Type 1 subfamily.

The protein localises to the cytoplasm. It catalyses the reaction (R)-pantoate + beta-alanine + ATP = (R)-pantothenate + AMP + diphosphate + H(+). The enzyme catalyses CMP + ATP = CDP + ADP. The catalysed reaction is dCMP + ATP = dCDP + ADP. The protein operates within cofactor biosynthesis; (R)-pantothenate biosynthesis; (R)-pantothenate from (R)-pantoate and beta-alanine: step 1/1. Functionally, catalyzes the condensation of pantoate with beta-alanine in an ATP-dependent reaction via a pantoyl-adenylate intermediate. Catalyzes the transfer of a phosphate group from ATP to either CMP or dCMP to form CDP or dCDP and ADP, respectively. The protein is Bifunctional pantoate ligase/cytidylate kinase of Synechococcus sp. (strain JA-3-3Ab) (Cyanobacteria bacterium Yellowstone A-Prime).